The chain runs to 76 residues: MKNAVLVFLLLSVFALSVNAYGYGCGWYGCPYGSKCICPYYGKCYCVPVYGKNCYIYGCPYPKVCVYGVCKWRYKY.

An N-terminal signal peptide occupies residues Met-1–Ala-20.

As to expression, prismatic layer of shell (at protein level). Expressed primarily in the mantle with equal levels in the mantle edge and the mantle pallium.

It localises to the secreted. This is an uncharacterized protein from Margaritifera margaritifera (Freshwater pearl mussel).